We begin with the raw amino-acid sequence, 532 residues long: Deoxyribodipyrimidine photo-lyase (532 aa).

A disordered region spans residues 1–57; that stretch reads MDSKKRSHSTGGEAENMESQESKAKRKPLQKHQFSKSNVVQKEEKDKTEGEEKGAEG. Residues 24–34 show a composition bias toward basic residues; the sequence is AKRKPLQKHQF. Positions 41-55 are enriched in basic and acidic residues; that stretch reads QKEEKDKTEGEEKGA. Residues 97-229 form the Photolyase/cryptochrome alpha/beta domain; that stretch reads QAFVYWMSRD…QVDAHNIVPC (133 aa). A DNA-binding site is contributed by Arg-322. Interaction with DNA stretches follow at residues 368-376 and 442-443; these read EAVVRRELA and GF. Residue 468–470 participates in FAD binding; it reads YLN.

Belongs to the DNA photolyase class-2 family. The cofactor is FAD.

The catalysed reaction is cyclobutadipyrimidine (in DNA) = 2 pyrimidine residues (in DNA).. Its function is as follows. Involved in repair of UV radiation-induced DNA damage. Catalyzes the light-dependent monomerization (300-600 nm) of cyclobutyl pyrimidine dimers (in cis-syn configuration), which are formed between adjacent bases on the same DNA strand upon exposure to ultraviolet radiation. This Potorous tridactylus (Potoroo) protein is Deoxyribodipyrimidine photo-lyase (PHR).